A 369-amino-acid polypeptide reads, in one-letter code: Coiled-coil domain-containing protein 130 homolog (369 aa).

Residues Thr-233 to Glu-263 show a composition bias toward basic and acidic residues. Positions Thr-233–Asp-369 are disordered. Positions Thr-266–Ser-282 are enriched in low complexity. A compositionally biased stretch (basic and acidic residues) spans Glu-283–Ile-297. Over residues Ala-299–Thr-310 the composition is skewed to low complexity.

It belongs to the CWC16 family.

This is Coiled-coil domain-containing protein 130 homolog from Caenorhabditis elegans.